The following is a 249-amino-acid chain: Proteasome subunit alpha type-7-B (249 aa).

It belongs to the peptidase T1A family. As to quaternary structure, the 26S proteasome consists of a 20S proteasome core and two 19S regulatory subunits. The 20S proteasome core is composed of 28 subunits that are arranged in four stacked rings, resulting in a barrel-shaped structure. The two end rings are each formed by seven alpha subunits, and the two central rings are each formed by seven beta subunits. The catalytic chamber with the active sites is on the inside of the barrel.

The protein localises to the cytoplasm. The protein resides in the nucleus. The proteasome is a multicatalytic proteinase complex which is characterized by its ability to cleave peptides with Arg, Phe, Tyr, Leu, and Glu adjacent to the leaving group at neutral or slightly basic pH. The proteasome has an ATP-dependent proteolytic activity. This chain is Proteasome subunit alpha type-7-B (PAD1), found in Oryza sativa subsp. indica (Rice).